Consider the following 1230-residue polypeptide: ATP-dependent helicase/nuclease subunit A (1230 aa).

A UvrD-like helicase ATP-binding domain is found at 9-480 (STWTDDQWKA…IDLNKNFRSR (472 aa)). 30-37 (AAAGSGKT) contacts ATP. The UvrD-like helicase C-terminal domain maps to 507 to 796 (QAELKLGASY…RLMTIHSSKG (290 aa)).

The protein belongs to the helicase family. AddA subfamily. In terms of assembly, heterodimer of AddA and AddB/RexB. Mg(2+) serves as cofactor.

The enzyme catalyses Couples ATP hydrolysis with the unwinding of duplex DNA by translocating in the 3'-5' direction.. It catalyses the reaction ATP + H2O = ADP + phosphate + H(+). The heterodimer acts as both an ATP-dependent DNA helicase and an ATP-dependent, dual-direction single-stranded exonuclease. Recognizes the chi site generating a DNA molecule suitable for the initiation of homologous recombination. The AddA nuclease domain is required for chi fragment generation; this subunit has the helicase and 3' -&gt; 5' nuclease activities. The sequence is that of ATP-dependent helicase/nuclease subunit A from Bacillus licheniformis (strain ATCC 14580 / DSM 13 / JCM 2505 / CCUG 7422 / NBRC 12200 / NCIMB 9375 / NCTC 10341 / NRRL NRS-1264 / Gibson 46).